The primary structure comprises 250 residues: MSSDPTHQFLIQKIVPIEIGGIDFSFTNASLFMAASAAIAAGFLYFATSNRAIVPGRSQSVAEIFYEFIAKMLTEGAGKQGMQFFPLVFSLFMFVLTANLLGMFPYFFTVTSQIIVTAALAILVIGTVVVYGFYKHGFKFLNVFVPSGVPGILLPLVVTIEIISFLSRPISLSVRLFANMLAGHITLKVFAGFVASLGALGAVGVGGAVLPLIMTVALTGLEFLVAFLQAYVFAVLTCMYLNDAIHPGGH.

6 consecutive transmembrane segments (helical) span residues 29 to 49 (ASLF…FATS), 84 to 104 (FFPL…LGMF), 114 to 134 (IIVT…YGFY), 143 to 163 (VFVP…IEII), 193 to 213 (FVAS…LPLI), and 216 to 236 (VALT…FAVL).

The protein belongs to the ATPase A chain family. F-type ATPases have 2 components, CF(1) - the catalytic core - and CF(0) - the membrane proton channel. CF(1) has five subunits: alpha(3), beta(3), gamma(1), delta(1), epsilon(1). CF(0) has three main subunits: a(1), b(2) and c(9-12). The alpha and beta chains form an alternating ring which encloses part of the gamma chain. CF(1) is attached to CF(0) by a central stalk formed by the gamma and epsilon chains, while a peripheral stalk is formed by the delta and b chains.

The protein localises to the cell inner membrane. Functionally, key component of the proton channel; it plays a direct role in the translocation of protons across the membrane. The chain is ATP synthase subunit a from Rhizobium johnstonii (strain DSM 114642 / LMG 32736 / 3841) (Rhizobium leguminosarum bv. viciae).